Reading from the N-terminus, the 404-residue chain is Cysteine desulfurase IscS (404 aa).

Pyridoxal 5'-phosphate-binding positions include alanine 75 to threonine 76, asparagine 155, glutamine 183, and serine 203 to histidine 205. Lysine 206 carries the N6-(pyridoxal phosphate)lysine modification. Threonine 243 contacts pyridoxal 5'-phosphate. The active-site Cysteine persulfide intermediate is cysteine 328. Cysteine 328 lines the [2Fe-2S] cluster pocket.

Belongs to the class-V pyridoxal-phosphate-dependent aminotransferase family. NifS/IscS subfamily. As to quaternary structure, homodimer. Forms a heterotetramer with IscU, interacts with other sulfur acceptors. Pyridoxal 5'-phosphate is required as a cofactor.

The protein localises to the cytoplasm. It carries out the reaction (sulfur carrier)-H + L-cysteine = (sulfur carrier)-SH + L-alanine. Its pathway is cofactor biosynthesis; iron-sulfur cluster biosynthesis. Master enzyme that delivers sulfur to a number of partners involved in Fe-S cluster assembly, tRNA modification or cofactor biosynthesis. Catalyzes the removal of elemental sulfur atoms from cysteine to produce alanine. Functions as a sulfur delivery protein for Fe-S cluster synthesis onto IscU, an Fe-S scaffold assembly protein, as well as other S acceptor proteins. In Pseudomonas putida (strain ATCC 700007 / DSM 6899 / JCM 31910 / BCRC 17059 / LMG 24140 / F1), this protein is Cysteine desulfurase IscS.